Consider the following 619-residue polypeptide: uncharacterized protein (619 aa).

The signal sequence occupies residues 1 to 21 (MKKLIAIIAVAAVVIAGFVFT).

This is an uncharacterized protein from Archaeoglobus fulgidus (strain ATCC 49558 / DSM 4304 / JCM 9628 / NBRC 100126 / VC-16).